The sequence spans 428 residues: GTPase Obg (428 aa).

One can recognise an Obg domain in the interval 1 to 158 (MFVDQTKIDV…RTLRLELKVL (158 aa)). The OBG-type G domain occupies 159 to 328 (ADVGLVGFPS…LMGKTADLVE (170 aa)). GTP contacts are provided by residues 165–172 (GFPSVGKS), 190–194 (FTTLT), 212–215 (DLPG), 282–285 (TQMD), and 309–311 (SSV). Mg(2+) contacts are provided by S172 and T192. In terms of domain architecture, OCT spans 350–428 (YKKPEDDGFK…IADFTFEFVD (79 aa)).

This sequence belongs to the TRAFAC class OBG-HflX-like GTPase superfamily. OBG GTPase family. As to quaternary structure, monomer. Mg(2+) is required as a cofactor.

The protein localises to the cytoplasm. Its function is as follows. An essential GTPase which binds GTP, GDP and possibly (p)ppGpp with moderate affinity, with high nucleotide exchange rates and a fairly low GTP hydrolysis rate. Plays a role in control of the cell cycle, stress response, ribosome biogenesis and in those bacteria that undergo differentiation, in morphogenesis control. The protein is GTPase Obg of Lactobacillus gasseri (strain ATCC 33323 / DSM 20243 / BCRC 14619 / CIP 102991 / JCM 1131 / KCTC 3163 / NCIMB 11718 / NCTC 13722 / AM63).